Here is a 638-residue protein sequence, read N- to C-terminus: MAEHRSMDGRMEAATRGGSHLQAAAQTPPRPGPPSAPPPPPKEGHQEGLVELPASFRELLTFFCTNATIHGAIRLVCSRGNRLKTTSWGLLSLGALVALCWQLGLLFERHWHRPVLMAVSVHSERKLLPLVTLCDGNPRRPSPVLRHLELLDEFARENIDSLYNVNLSQGRAALSAPVPRHEPPFHLDREIRLQRLSHSGSRVRVGFRLCNSTGGDCFYRGYTSGVAAVQDWCHFHYVDILALLPAAWEDSHGSQDGHFVLSCSYDGLDCQARQFRTFHHPTYGSCYTVDGVWTAQRPGITHGVGLVLRVEQQPHLPLLSTLAGIRVMVHGRNHTPFLGHHSFSVRPGTEATISIREDEVHRLGSPYGHCTAGAEGVEVELLHNTSYTRQACLVSCFQQLMVETCSCGYYLHPLPAGAEYCSSARHPAWGHCFYRLYQDLETHRLPCTSRCPRPCRESAFKLSTGTSRWPSAKSAGWTLATLGEQGLPRQSHRQRSSLAKINIVYQELNYRSVEEAPVYSVPQLLSAMGSLCSLWFGASVLSLLELLELLLDASALTLVLGGRRLRRAWFSWPRASPASGASSIKPEASQMPTPAGGTSDDPEPSGPHLPRVMLPGVLAGVSAEESWAGPQPLETLDT.

Residues 1–13 (MAEHRSMDGRMEA) show a composition bias toward basic and acidic residues. The tract at residues 1 to 47 (MAEHRSMDGRMEAATRGGSHLQAAAQTPPRPGPPSAPPPPPKEGHQE) is disordered. The Cytoplasmic portion of the chain corresponds to 1–86 (MAEHRSMDGR…CSRGNRLKTT (86 aa)). A compositionally biased stretch (pro residues) spans 28–41 (PPRPGPPSAPPPPP). The helical transmembrane segment at 87–107 (SWGLLSLGALVALCWQLGLLF) threads the bilayer. Residues 108–530 (ERHWHRPVLM…VPQLLSAMGS (423 aa)) lie on the Extracellular side of the membrane. Asn-166 and Asn-384 each carry an N-linked (GlcNAc...) asparagine glycan. The chain crosses the membrane as a helical span at residues 531–551 (LCSLWFGASVLSLLELLELLL). The Cytoplasmic portion of the chain corresponds to 552–638 (DASALTLVLG…GPQPLETLDT (87 aa)). The interval 574 to 613 (RASPASGASSIKPEASQMPTPAGGTSDDPEPSGPHLPRVM) is disordered.

The protein belongs to the amiloride-sensitive sodium channel (TC 1.A.6) family. SCNN1D subfamily. In terms of assembly, can form an alternative heterotrimeric epithelial sodium channel (ENaC), composed of a delta (SCNN1D), beta (SCNN1B), and gamma (SCNN1G) subunit, where the delta (SCNN1D) subunit replaces the alpha (SCNN1A) subunit.

It is found in the apical cell membrane. The enzyme catalyses Na(+)(in) = Na(+)(out). Its activity is regulated as follows. Originally identified and characterized by its inhibition by the diuretic drug amiloride. Its function is as follows. Potential alternative pore-forming subunit of the epithelial sodium channel (ENaC), capable of replacing the alpha/SCNN1A subunit, creating a more active channel with distinct properties. ENaC functions in epithelial tissues, where it facilitates the electrodiffusion of sodium ions from the extracellular fluid through the apical membrane of cells, with water following osmotically, regulating sodium balance and fluid homeostasis. This subunit could also function independently as a sodium channel or assemble into other tissue-specific heterotrimeric sodium channels. This is Epithelial sodium channel subunit delta from Pan troglodytes (Chimpanzee).